We begin with the raw amino-acid sequence, 217 residues long: Probable transaldolase (217 aa).

The active-site Schiff-base intermediate with substrate is the Lys83.

The protein belongs to the transaldolase family. Type 3B subfamily.

The protein localises to the cytoplasm. It catalyses the reaction D-sedoheptulose 7-phosphate + D-glyceraldehyde 3-phosphate = D-erythrose 4-phosphate + beta-D-fructose 6-phosphate. Its pathway is carbohydrate degradation; pentose phosphate pathway; D-glyceraldehyde 3-phosphate and beta-D-fructose 6-phosphate from D-ribose 5-phosphate and D-xylulose 5-phosphate (non-oxidative stage): step 2/3. Functionally, transaldolase is important for the balance of metabolites in the pentose-phosphate pathway. This is Probable transaldolase from Clostridium botulinum (strain Hall / ATCC 3502 / NCTC 13319 / Type A).